A 1031-amino-acid polypeptide reads, in one-letter code: Beta-galactosidase (1031 aa).

Positions 98 and 197 each coordinate substrate. Aspartate 197 is a binding site for Na(+). Mg(2+) is bound by residues glutamate 412, histidine 414, and glutamate 457. Residues glutamate 457 and 533 to 536 (EYAH) each bind substrate. The active-site Proton donor is glutamate 457. Glutamate 533 (nucleophile) is an active-site residue. Asparagine 593 serves as a coordination point for Mg(2+). Residues phenylalanine 597 and aspartate 600 each coordinate Na(+). Residues aspartate 600 and tryptophan 1005 each contribute to the substrate site.

The protein belongs to the glycosyl hydrolase 2 family. In terms of assembly, homotetramer. The cofactor is Mg(2+). Na(+) serves as cofactor.

The enzyme catalyses Hydrolysis of terminal non-reducing beta-D-galactose residues in beta-D-galactosides.. The sequence is that of Beta-galactosidase from Oenococcus oeni (strain ATCC BAA-331 / PSU-1).